The following is an 83-amino-acid chain: UPF0512 protein G (83 aa).

It belongs to the UPF0512 family.

The sequence is that of UPF0512 protein G from Dictyostelium discoideum (Social amoeba).